Reading from the N-terminus, the 565-residue chain is Polycomb protein EED (565 aa).

WD repeat units lie at residues 89–133 (DDGN…LYRT), 136–176 (GHGG…EKQP), 185–224 (GHSY…NEHM), and 240–278 (IHNN…SDDP). A disordered region spans residues 417-488 (VKKAPGAAGS…SASPDPDSPF (72 aa)). Residues 429-450 (GTAANGGHNNNNNNNNNNNNNN) are compositionally biased toward low complexity. A compositionally biased stretch (polar residues) spans 451–468 (HETGSQRSFSATNNLSNS). The WD 5 repeat unit spans residues 519-559 (IDGAFVGRQVGWSPEGEWCVVVGNGNRALIYQRWGKERGLG).

Belongs to the WD repeat ESC family. In terms of assembly, component of the polycomb repressive complex 2 (PRC2) that consists of four core subunits icluding EZH2, EED, SUZ12, and RBBP4, among which EZH2 is the catalytic subunit and which minimally requires EED and SUZ12 for catalysis.

It is found in the nucleus. Component of the of the Polycomb Repressive Complex 2 (PRC2), a histone H3 lysine methyltransferase responsible for generating mono-, di-, and tri-methylation on Lys27 (H3K27me1, H3K27me2 and H3K27me3). The tri-methylated form is known to be critical in gene repression, and its proper placement is essential in defining repression patterns during development. EED is not a catalytic subunit but is required for the complex regulation of histone H3 lysine methylation by EZH2. The chain is Polycomb protein EED from Chaetomium thermophilum (strain DSM 1495 / CBS 144.50 / IMI 039719) (Thermochaetoides thermophila).